The following is a 958-amino-acid chain: Isoleucine--tRNA ligase (958 aa).

The segment at 1–32 (MSDNQNKPGKPAAKPQSKYPVNMTDTPFPMRG) is disordered. A 'HIGH' region motif is present at residues 71–81 (PYANGDIHLGH). E590 is a binding site for L-isoleucyl-5'-AMP. Residues 631-635 (KMSKS) carry the 'KMSKS' region motif. ATP is bound at residue K634. Zn(2+) contacts are provided by C921, C924, C941, and C944.

The protein belongs to the class-I aminoacyl-tRNA synthetase family. IleS type 1 subfamily. Monomer. Requires Zn(2+) as cofactor.

The protein localises to the cytoplasm. It carries out the reaction tRNA(Ile) + L-isoleucine + ATP = L-isoleucyl-tRNA(Ile) + AMP + diphosphate. In terms of biological role, catalyzes the attachment of isoleucine to tRNA(Ile). As IleRS can inadvertently accommodate and process structurally similar amino acids such as valine, to avoid such errors it has two additional distinct tRNA(Ile)-dependent editing activities. One activity is designated as 'pretransfer' editing and involves the hydrolysis of activated Val-AMP. The other activity is designated 'posttransfer' editing and involves deacylation of mischarged Val-tRNA(Ile). The sequence is that of Isoleucine--tRNA ligase from Janthinobacterium sp. (strain Marseille) (Minibacterium massiliensis).